Consider the following 289-residue polypeptide: Agmatinase (289 aa).

Mn(2+) contacts are provided by His112, Asp135, His137, Asp139, Asp216, and Asp218.

This sequence belongs to the arginase family. Agmatinase subfamily. Mn(2+) is required as a cofactor.

The enzyme catalyses agmatine + H2O = urea + putrescine. The protein operates within amine and polyamine biosynthesis; putrescine biosynthesis via agmatine pathway; putrescine from agmatine: step 1/1. Its function is as follows. Catalyzes the formation of putrescine from agmatine. The protein is Agmatinase (speB) of Halalkalibacterium halodurans (strain ATCC BAA-125 / DSM 18197 / FERM 7344 / JCM 9153 / C-125) (Bacillus halodurans).